The primary structure comprises 462 residues: Glutamate--tRNA ligase (462 aa).

The short motif at 11–21 is the 'HIGH' region element; sequence PSPTGFIHLGN. Residues 120–131 are compositionally biased toward basic and acidic residues; the sequence is KPRYDGTWRPEP. The disordered stretch occupies residues 120–140; that stretch reads KPRYDGTWRPEPGKTLPPIPA. Residues 243-247 carry the 'KMSKS' region motif; the sequence is KMSKR. Lys246 provides a ligand contact to ATP.

Belongs to the class-I aminoacyl-tRNA synthetase family. Glutamate--tRNA ligase type 1 subfamily. As to quaternary structure, monomer.

Its subcellular location is the cytoplasm. The catalysed reaction is tRNA(Glu) + L-glutamate + ATP = L-glutamyl-tRNA(Glu) + AMP + diphosphate. Catalyzes the attachment of glutamate to tRNA(Glu) in a two-step reaction: glutamate is first activated by ATP to form Glu-AMP and then transferred to the acceptor end of tRNA(Glu). The protein is Glutamate--tRNA ligase of Polaromonas sp. (strain JS666 / ATCC BAA-500).